Here is a 270-residue protein sequence, read N- to C-terminus: Urease accessory protein UreD (270 aa).

Belongs to the UreD family. As to quaternary structure, ureD, UreF and UreG form a complex that acts as a GTP-hydrolysis-dependent molecular chaperone, activating the urease apoprotein by helping to assemble the nickel containing metallocenter of UreC. The UreE protein probably delivers the nickel.

The protein localises to the cytoplasm. Required for maturation of urease via the functional incorporation of the urease nickel metallocenter. This chain is Urease accessory protein UreD, found in Actinobacillus pleuropneumoniae serotype 7 (strain AP76).